The following is a 375-amino-acid chain: DNA replication and repair protein RecF (375 aa).

Gly34–Thr41 is an ATP binding site.

This sequence belongs to the RecF family.

It is found in the cytoplasm. The RecF protein is involved in DNA metabolism; it is required for DNA replication and normal SOS inducibility. RecF binds preferentially to single-stranded, linear DNA. It also seems to bind ATP. The sequence is that of DNA replication and repair protein RecF from Rhizobium rhizogenes (strain K84 / ATCC BAA-868) (Agrobacterium radiobacter).